Consider the following 111-residue polypeptide: Nucleoid-associated protein lhv_0401 (111 aa).

This sequence belongs to the YbaB/EbfC family. As to quaternary structure, homodimer.

It localises to the cytoplasm. The protein localises to the nucleoid. Its function is as follows. Binds to DNA and alters its conformation. May be involved in regulation of gene expression, nucleoid organization and DNA protection. The chain is Nucleoid-associated protein lhv_0401 from Lactobacillus helveticus (strain DPC 4571).